Reading from the N-terminus, the 477-residue chain is Ribulose bisphosphate carboxylase large chain (477 aa).

Positions 1 to 2 (MS) are excised as a propeptide. At Pro3 the chain carries N-acetylproline. Residue Lys14 is modified to N6,N6,N6-trimethyllysine. 2 residues coordinate substrate: Asn123 and Thr173. Lys175 functions as the Proton acceptor in the catalytic mechanism. Lys177 contributes to the substrate binding site. The Mg(2+) site is built by Lys201, Asp203, and Glu204. The residue at position 201 (Lys201) is an N6-carboxylysine. The active-site Proton acceptor is the His294. Substrate is bound by residues Arg295, His327, and Ser379.

It belongs to the RuBisCO large chain family. Type I subfamily. As to quaternary structure, heterohexadecamer of 8 large chains and 8 small chains; disulfide-linked. The disulfide link is formed within the large subunit homodimers. Mg(2+) is required as a cofactor. The disulfide bond which can form in the large chain dimeric partners within the hexadecamer appears to be associated with oxidative stress and protein turnover.

It is found in the plastid. The protein localises to the chloroplast. The enzyme catalyses 2 (2R)-3-phosphoglycerate + 2 H(+) = D-ribulose 1,5-bisphosphate + CO2 + H2O. The catalysed reaction is D-ribulose 1,5-bisphosphate + O2 = 2-phosphoglycolate + (2R)-3-phosphoglycerate + 2 H(+). Its function is as follows. RuBisCO catalyzes two reactions: the carboxylation of D-ribulose 1,5-bisphosphate, the primary event in carbon dioxide fixation, as well as the oxidative fragmentation of the pentose substrate in the photorespiration process. Both reactions occur simultaneously and in competition at the same active site. The polypeptide is Ribulose bisphosphate carboxylase large chain (Carthamus tinctorius (Safflower)).